A 157-amino-acid polypeptide reads, in one-letter code: Recombination endonuclease VII (157 aa).

The Zn(2+) site is built by Cys-23 and Cys-26. Asp-40 lines the Ca(2+) pocket. Cys-58 and Cys-61 together coordinate Zn(2+). Asn-62 serves as a coordination point for Ca(2+).

Homodimer. Requires Ca(2+) as cofactor. It depends on Zn(2+) as a cofactor.

Its function is as follows. Cleaves DNA cruciform and Y-structures as well as heteroduplex loops. Resolves Holliday junctions, recognizes a broad spectrum of DNA substrates ranging from branched DNAs to single base mismatches. In Enterobacteria phage T4 (Bacteriophage T4), this protein is Recombination endonuclease VII (49).